A 552-amino-acid polypeptide reads, in one-letter code: Amino-acid acetyltransferase, mitochondrial (552 aa).

The transit peptide at 1–32 (MIKTWIRCLTTEVRYHQPNAHGRSLVMSVLNS) directs the protein to the mitochondrion. The N-acetyltransferase domain occupies 379-545 (QTGKSDPVSK…LRDYAKYVRD (167 aa)).

The protein belongs to the acetyltransferase family.

The protein resides in the mitochondrion. It catalyses the reaction L-glutamate + acetyl-CoA = N-acetyl-L-glutamate + CoA + H(+). It participates in amino-acid biosynthesis; L-arginine biosynthesis; N(2)-acetyl-L-ornithine from L-glutamate: step 1/4. N-acetylglutamate synthase involved in arginine biosynthesis. The protein is Amino-acid acetyltransferase, mitochondrial (ARG2) of Kluyveromyces lactis (strain ATCC 8585 / CBS 2359 / DSM 70799 / NBRC 1267 / NRRL Y-1140 / WM37) (Yeast).